A 1188-amino-acid polypeptide reads, in one-letter code: DNA-directed RNA polymerase II subunit 2 (1188 aa).

Asp800 lines the Mg(2+) pocket. 2 disordered regions span residues 852-871 and 877-897; these read SYDK…VSGE and KTTP…TRRD. Residues 879–892 are compositionally biased toward polar residues; it reads TPISQDEAQGQSSR. Positions 1124, 1127, 1142, and 1145 each coordinate Zn(2+). The C4-type zinc-finger motif lies at 1124–1145; the sequence is CEVCGLIAIANLKKNSFECRGC.

This sequence belongs to the RNA polymerase beta chain family. In terms of assembly, component of the RNA polymerase II complex consisting of at least 12 subunits.

It is found in the nucleus. It catalyses the reaction RNA(n) + a ribonucleoside 5'-triphosphate = RNA(n+1) + diphosphate. Functionally, DNA-dependent RNA polymerase catalyzes the transcription of DNA into RNA using the four ribonucleoside triphosphates as substrates. Second largest component of RNA polymerase II which synthesizes mRNA precursors and many functional non-coding RNAs. Proposed to contribute to the polymerase catalytic activity and forms the polymerase active center together with the largest subunit. Pol II is the central component of the basal RNA polymerase II transcription machinery. It is composed of mobile elements that move relative to each other. NRPB2 is part of the core element with the central large cleft, the clamp element that moves to open and close the cleft and the jaws that are thought to grab the incoming DNA template. In terms of biological role, essential for the completion of the three rounds of mitosis in female megaspores required for the development of mature gametophytes. The sequence is that of DNA-directed RNA polymerase II subunit 2 (NRPB2) from Arabidopsis thaliana (Mouse-ear cress).